An 878-amino-acid chain; its full sequence is Microtubule-associated protein homolog maph-1.1 (878 aa).

2 disordered regions span residues 224–425 (ALSD…AQAT) and 456–518 (EIPP…PVVP). Low complexity-rich tracts occupy residues 241–268 (PSARPATTTGTATRPTRPAVPAASAPRA), 278–293 (SRPTTTRNAAPAPRTA), 310–321 (APTRAPVPARSA), and 328–339 (APAKPAANTAKA). Basic and acidic residues-rich tracts occupy residues 416–425 (PPRHEVAQAT) and 480–496 (EEDKIPEPVDAFKKPDP).

The protein belongs to the MAP1A/MAP1B/MAP1S family. As to quaternary structure, interacts with dlg-1.

The protein resides in the cell projection. The protein localises to the dendrite. Its subcellular location is the perikaryon. It is found in the axon. It localises to the cytoplasm. The protein resides in the cytoskeleton. The protein is Microtubule-associated protein homolog maph-1.1 of Caenorhabditis elegans.